A 180-amino-acid chain; its full sequence is Oligoribonuclease (180 aa).

The Exonuclease domain occupies 7–170 (LIWIDLEMTG…DDIRESIAEL (164 aa)). Tyrosine 128 is a catalytic residue.

This sequence belongs to the oligoribonuclease family.

The protein localises to the cytoplasm. Its function is as follows. 3'-to-5' exoribonuclease specific for small oligoribonucleotides. The sequence is that of Oligoribonuclease from Pseudomonas fluorescens (strain ATCC BAA-477 / NRRL B-23932 / Pf-5).